Here is a 340-residue protein sequence, read N- to C-terminus: L-threonine 3-dehydrogenase (340 aa).

Residue cysteine 38 coordinates Zn(2+). Active-site charge relay system residues include threonine 40 and histidine 43. 6 residues coordinate Zn(2+): histidine 63, glutamate 64, cysteine 93, cysteine 96, cysteine 99, and cysteine 107. Residues isoleucine 175, aspartate 195, arginine 200, 261–263 (LGI), and 285–286 (IY) each bind NAD(+).

Belongs to the zinc-containing alcohol dehydrogenase family. Homotetramer. Zn(2+) is required as a cofactor.

It localises to the cytoplasm. The catalysed reaction is L-threonine + NAD(+) = (2S)-2-amino-3-oxobutanoate + NADH + H(+). It participates in amino-acid degradation; L-threonine degradation via oxydo-reductase pathway; glycine from L-threonine: step 1/2. In terms of biological role, catalyzes the NAD(+)-dependent oxidation of L-threonine to 2-amino-3-ketobutyrate. This is L-threonine 3-dehydrogenase from Stenotrophomonas maltophilia (strain K279a).